We begin with the raw amino-acid sequence, 863 residues long: Leucine--tRNA ligase (863 aa).

A 'HIGH' region motif is present at residues 40 to 51; sequence PYPSGAGLHVGH. The 'KMSKS' region signature appears at 635–639; sequence KMSKS. Position 638 (K638) interacts with ATP.

It belongs to the class-I aminoacyl-tRNA synthetase family.

It localises to the cytoplasm. The catalysed reaction is tRNA(Leu) + L-leucine + ATP = L-leucyl-tRNA(Leu) + AMP + diphosphate. In Leptospira interrogans serogroup Icterohaemorrhagiae serovar Lai (strain 56601), this protein is Leucine--tRNA ligase.